We begin with the raw amino-acid sequence, 144 residues long: Transcriptional regulator MraZ (144 aa).

2 consecutive SpoVT-AbrB domains span residues 5–47 (TYTP…PRAE) and 77–120 (TDEQ…DAQA).

This sequence belongs to the MraZ family. As to quaternary structure, forms oligomers.

It is found in the cytoplasm. The protein resides in the nucleoid. The chain is Transcriptional regulator MraZ from Mycolicibacterium vanbaalenii (strain DSM 7251 / JCM 13017 / BCRC 16820 / KCTC 9966 / NRRL B-24157 / PYR-1) (Mycobacterium vanbaalenii).